A 66-amino-acid chain; its full sequence is Large ribosomal subunit protein bL33 (66 aa).

This sequence belongs to the bacterial ribosomal protein bL33 family.

The protein is Large ribosomal subunit protein bL33 of Prochlorococcus marinus (strain MIT 9303).